A 941-amino-acid polypeptide reads, in one-letter code: Ankyrin repeat and MYND domain-containing protein 1 (941 aa).

MORN repeat units follow at residues 2–24, 25–47, and 70–92; these read YQGE…TGES, YHGQ…DGSS, and FQGL…DGSQ. ANK repeat units lie at residues 292–321, 513–542, 545–574, 581–613, 657–691, 694–723, and 737–766; these read KGYT…DVNK, MRRM…DPNL, VPMQ…RTDI, STLT…DVDA, GGRT…NPNL, SGHS…DPNL, and CDLT…DILK. 8 residues coordinate Zn(2+): Cys-880, Cys-883, Cys-894, Cys-897, Cys-903, Cys-907, His-916, and Cys-920. An MYND-type zinc finger spans residues 880–920; the sequence is CYQCGRSIGVRLLPCPRCYGILTCSKYCKTKAWTEFHKKDC.

The protein is Ankyrin repeat and MYND domain-containing protein 1 (ANKMY1) of Homo sapiens (Human).